Here is a 133-residue protein sequence, read N- to C-terminus: Sporulation-specific protein 2 (133 aa).

The protein belongs to the VPS13 family. Interacts with spo13 and spo15.

It localises to the cytoplasm. Its subcellular location is the cytoskeleton. The protein localises to the microtubule organizing center. It is found in the spindle pole body. In terms of biological role, involved in sporulation. Plays a significant role in modification of the spindle pole body prior to spore formation and is required for initiating forespore membrane formation. Assists in the localization of spo13 to the outer surface of the SPB. This is Sporulation-specific protein 2 (spo2) from Schizosaccharomyces pombe (strain 972 / ATCC 24843) (Fission yeast).